A 306-amino-acid polypeptide reads, in one-letter code: Transcription factor MYBS1 (306 aa).

One can recognise a Myb-like domain in the interval 18-73 (WTREDDKAFENALAACAAPPPADGGAPDDDWFAALAASVPGARSAEEVRRHYEALV). The Nuclear export signal 1 motif lies at 72-86 (LVEDVAAIDAGRVPL). A disordered region spans residues 89-142 (YAGEESAAPPDGAGAAAAASKDGGHRRDERKGGGGGYDGGKSCSKAEQERRKGI). Residues 92 to 109 (EESAAPPDGAGAAAAASK) show a composition bias toward low complexity. Basic and acidic residues-rich tracts occupy residues 110–120 (DGGHRRDERKG) and 132–142 (SKAEQERRKGI). Positions 133–140 (KAEQERRK) match the Nuclear localization signal 1 motif. The HTH myb-type domain occupies 136-192 (QERRKGIPWTEEEHRLFLLGLDKFGKGDWRSISRNFVISRTPTQVASHAQKYFIRLN). Positions 164-188 (WRSISRNFVISRTPTQVASHAQKYF) form a DNA-binding region, H-T-H motif. The Nuclear localization signal 2 signature appears at 196-200 (RDRRR). The short motif at 203–215 (IHDITSVTAGDQV) is the Nuclear export signal 2 element. A compositionally biased stretch (low complexity) spans 228-241 (ATGNPAAAALGPPG). Residues 228 to 255 (ATGNPAAAALGPPGMKHHHHHHPGGAPP) are disordered.

As to quaternary structure, homodimer. Interacts with GAMYB. As to expression, expressed in aboveground tissues, with the highest level in leaves.

It localises to the nucleus. The protein localises to the cytoplasm. Functionally, transcription activator that binds to 5'-TATCCA-3' elements in gene promoters. Derepresses strongly the sugar-repressed transcription of promoters containing SRS or 5'-TATCCA-3' elements. Functions with GAMYB to integrate diverse nutrient starvation and gibberellin (GA) signaling pathways during germination of grains. Sugar, nitrogen and phosphate starvation signals converge and interconnect with GA to promote the co-nuclear import of MYBS1 and GAMYB, resulting in the expression of a large set of GA-inducible hydrolases, transporters, and regulators that are essential for mobilization of nutrient reserves in the endosperm to support seedling growth. The protein is Transcription factor MYBS1 of Oryza sativa subsp. japonica (Rice).